The primary structure comprises 326 residues: 3-isopropylmalate dehydrogenase (326 aa).

Substrate-binding residues include arginine 81, arginine 91, arginine 112, and aspartate 198. Positions 198, 222, and 226 each coordinate Mg(2+). 255–267 (GAAFDIAGKGIAN) contributes to the NAD(+) binding site.

The protein belongs to the isocitrate and isopropylmalate dehydrogenases family. In terms of assembly, homotetramer. It depends on Mg(2+) as a cofactor. Mn(2+) serves as cofactor.

The protein localises to the cytoplasm. It catalyses the reaction (2R,3S)-3-isopropylmalate + NAD(+) = 4-methyl-2-oxopentanoate + CO2 + NADH. The protein operates within amino-acid biosynthesis; L-leucine biosynthesis; L-leucine from 3-methyl-2-oxobutanoate: step 3/4. Catalyzes the oxidation of 3-carboxy-2-hydroxy-4-methylpentanoate (3-isopropylmalate) to 3-carboxy-4-methyl-2-oxopentanoate. The product decarboxylates to 4-methyl-2 oxopentanoate. The sequence is that of 3-isopropylmalate dehydrogenase (leuB) from Archaeoglobus fulgidus (strain ATCC 49558 / DSM 4304 / JCM 9628 / NBRC 100126 / VC-16).